Consider the following 325-residue polypeptide: uncharacterized protein (325 aa).

The interval 1 to 75 (MSQPPEHPGN…PPPGYPTHLQ (75 aa)) is disordered. 2 stretches are compositionally biased toward pro residues: residues 24 to 39 (YPPP…PGYG) and 50 to 70 (YNAP…PPGY). 4 helical membrane-spanning segments follow: residues 96–116 (AVTL…VIGA), 153–173 (IVMF…HAGI), 205–225 (LLIV…GLIF), and 273–293 (LVGE…AALI).

The protein localises to the cell membrane. This is an uncharacterized protein from Mycobacterium tuberculosis (strain CDC 1551 / Oshkosh).